We begin with the raw amino-acid sequence, 172 residues long: Adenine phosphoribosyltransferase (172 aa).

This sequence belongs to the purine/pyrimidine phosphoribosyltransferase family. As to quaternary structure, homodimer.

Its subcellular location is the cytoplasm. The enzyme catalyses AMP + diphosphate = 5-phospho-alpha-D-ribose 1-diphosphate + adenine. The protein operates within purine metabolism; AMP biosynthesis via salvage pathway; AMP from adenine: step 1/1. Its function is as follows. Catalyzes a salvage reaction resulting in the formation of AMP, that is energically less costly than de novo synthesis. This chain is Adenine phosphoribosyltransferase, found in Polynucleobacter asymbioticus (strain DSM 18221 / CIP 109841 / QLW-P1DMWA-1) (Polynucleobacter necessarius subsp. asymbioticus).